The following is a 257-amino-acid chain: Zinc import ATP-binding protein ZnuC (257 aa).

In terms of domain architecture, ABC transporter spans 6-221 (IRLEQVGVSF…PAFVELFGQN (216 aa)). 38–45 (GPNGAGKT) lines the ATP pocket.

Belongs to the ABC transporter superfamily. Zinc importer (TC 3.A.1.15.5) family. In terms of assembly, the complex is composed of two ATP-binding proteins (ZnuC), two transmembrane proteins (ZnuB) and a solute-binding protein (ZnuA).

It localises to the cell inner membrane. It carries out the reaction Zn(2+)(out) + ATP(in) + H2O(in) = Zn(2+)(in) + ADP(in) + phosphate(in) + H(+)(in). Part of the ABC transporter complex ZnuABC involved in zinc import. Responsible for energy coupling to the transport system. This is Zinc import ATP-binding protein ZnuC from Pseudomonas entomophila (strain L48).